Here is a 126-residue protein sequence, read N- to C-terminus: Nitrogenase-stabilizing/protective protein NifW (126 aa).

The segment at 104-126 is disordered; it reads VPMSEITVERPATTQTDEKGQQR.

It belongs to the NifW family. Homotrimer; associates with NifD.

In terms of biological role, may protect the nitrogenase Fe-Mo protein from oxidative damage. The protein is Nitrogenase-stabilizing/protective protein NifW of Parafrankia sp. (strain EAN1pec).